Here is a 307-residue protein sequence, read N- to C-terminus: uncharacterized protein (307 aa).

The first 25 residues, 1–25, serve as a signal peptide directing secretion; the sequence is MKFQKRNIQLVLILLLILNNCFINS. The disordered stretch occupies residues 60 to 90; the sequence is ENNNKNNNNNNNNNNNNNNNNKNSKVKNDDS. The segment covering 63–82 has biased composition (low complexity); that stretch reads NKNNNNNNNNNNNNNNNNKN. N-linked (GlcNAc...) asparagine glycans are attached at residues N124 and N173. 2 helical membrane-spanning segments follow: residues 244-264 and 275-295; these read IIFA…YYLA and IIGV…TIVI.

The protein resides in the membrane. This is an uncharacterized protein from Dictyostelium discoideum (Social amoeba).